Here is a 704-residue protein sequence, read N- to C-terminus: Elongation factor G (704 aa).

One can recognise a tr-type G domain in the interval 8-291 (DKVRNIGIMA…TVVECLPSPV (284 aa)). GTP-binding positions include 17 to 24 (AHIDAGKT), 90 to 94 (DTPGH), and 144 to 147 (NKMD).

Belongs to the TRAFAC class translation factor GTPase superfamily. Classic translation factor GTPase family. EF-G/EF-2 subfamily.

It localises to the cytoplasm. In terms of biological role, catalyzes the GTP-dependent ribosomal translocation step during translation elongation. During this step, the ribosome changes from the pre-translocational (PRE) to the post-translocational (POST) state as the newly formed A-site-bound peptidyl-tRNA and P-site-bound deacylated tRNA move to the P and E sites, respectively. Catalyzes the coordinated movement of the two tRNA molecules, the mRNA and conformational changes in the ribosome. This is Elongation factor G from Prosthecochloris aestuarii (strain DSM 271 / SK 413).